The chain runs to 324 residues: Acetyl-coenzyme A carboxylase carboxyl transferase subunit alpha (324 aa).

The CoA carboxyltransferase C-terminal domain maps to arginine 44–serine 298.

This sequence belongs to the AccA family. As to quaternary structure, acetyl-CoA carboxylase is a heterohexamer composed of biotin carboxyl carrier protein (accB), biotin carboxylase (accC) and two subunits each of ACCase subunit alpha (accA) and ACCase subunit beta (accD).

It is found in the plastid. It localises to the chloroplast. The enzyme catalyses N(6)-carboxybiotinyl-L-lysyl-[protein] + acetyl-CoA = N(6)-biotinyl-L-lysyl-[protein] + malonyl-CoA. It participates in lipid metabolism; malonyl-CoA biosynthesis; malonyl-CoA from acetyl-CoA: step 1/1. Its function is as follows. Component of the acetyl coenzyme A carboxylase (ACC) complex. First, biotin carboxylase catalyzes the carboxylation of biotin on its carrier protein (BCCP) and then the CO(2) group is transferred by the carboxyltransferase to acetyl-CoA to form malonyl-CoA. This is Acetyl-coenzyme A carboxylase carboxyl transferase subunit alpha from Pyropia yezoensis (Susabi-nori).